Here is a 173-residue protein sequence, read N- to C-terminus: Large ribosomal subunit protein uL29c (173 aa).

The transit peptide at 1–60 directs the protein to the chloroplast; sequence MLSLSIATPGTAAIFRRGTASATSTSSSFHGVRIQHQVSARVPAAATISSSSPKPSVVMM. A disordered region spans residues 143-173; sequence KKSIVPRPPPSLKKLQEEEAAEEAAEAAKSA. The residue at position 172 (serine 172) is a Phosphoserine.

The protein belongs to the universal ribosomal protein uL29 family. As to quaternary structure, part of the 50S ribosomal subunit.

It localises to the plastid. The protein resides in the chloroplast. This is Large ribosomal subunit protein uL29c (RPL29) from Arabidopsis thaliana (Mouse-ear cress).